The sequence spans 281 residues: Probable endonuclease 4 (281 aa).

Zn(2+) is bound by residues H69, H109, E145, D179, H182, H216, D229, H231, and E261.

It belongs to the AP endonuclease 2 family. The cofactor is Zn(2+).

It catalyses the reaction Endonucleolytic cleavage to 5'-phosphooligonucleotide end-products.. In terms of biological role, endonuclease IV plays a role in DNA repair. It cleaves phosphodiester bonds at apurinic or apyrimidinic (AP) sites, generating a 3'-hydroxyl group and a 5'-terminal sugar phosphate. The sequence is that of Probable endonuclease 4 from Aeromonas salmonicida (strain A449).